A 308-amino-acid polypeptide reads, in one-letter code: GTP-binding protein RAD (308 aa).

Positions 1–16 (MTLNGGGSGAGGSRGG) are enriched in gly residues. A disordered region spans residues 1-88 (MTLNGGGSGA…SLSSGGSDSD (88 aa)). Arg-24 is modified (omega-N-methylarginine). Position 26 is a phosphoserine (Ser-26). The segment covering 48–68 (QAALTPGALTAAAAGTGTQGP) has biased composition (low complexity). GTP is bound by residues 98–105 (GAPGVGKS) and 203–206 (NKSD). The segment at 278–297 (AKRFLGRIVARNSRKMAFRA) is calmodulin-binding.

It belongs to the small GTPase superfamily. RGK family. Interacts with calmodulin preferentially in the inactive, GDP-bound form. Binds CAMKII which is capable of phosphorylating RAD in vitro. Interacts with CAMK2D. Interacts with CACNB2; interaction may be involved in beta-adrenergic regulation of heart rate and contractile force. Interaction with CACNB2 regulates the trafficking of CACNA1C to the cell membrane. Most abundantly expressed in the heart. Also found in the skeletal muscle and lung. Lesser amounts in placenta and kidney. Also detected in adipose tissue. Overexpressed in muscle of type II diabetic humans.

The protein resides in the cell membrane. In terms of biological role, may regulate basal voltage-dependent L-type Ca(2+) currents and be required for beta-adrenergic augmentation of Ca(2+) influx in cardiomyocytes, thereby regulating increases in heart rate and contractile force. May play an important role in cardiac antiarrhythmia via the strong suppression of voltage-gated L-type Ca(2+) currents. Regulates voltage-dependent L-type calcium channel subunit alpha-1C trafficking to the cell membrane. Inhibits cardiac hypertrophy through the calmodulin-dependent kinase II (CaMKII) pathway. Inhibits phosphorylation and activation of CAMK2D. The protein is GTP-binding protein RAD (RRAD) of Homo sapiens (Human).